The following is a 212-amino-acid chain: Small ribosomal subunit protein eS6 (212 aa).

This sequence belongs to the eukaryotic ribosomal protein eS6 family.

This Metallosphaera sedula (strain ATCC 51363 / DSM 5348 / JCM 9185 / NBRC 15509 / TH2) protein is Small ribosomal subunit protein eS6.